Reading from the N-terminus, the 391-residue chain is Phosphopentomutase (391 aa).

Positions 12, 285, 290, 326, 327, and 338 each coordinate Mn(2+).

Belongs to the phosphopentomutase family. Mn(2+) is required as a cofactor.

Its subcellular location is the cytoplasm. The catalysed reaction is 2-deoxy-alpha-D-ribose 1-phosphate = 2-deoxy-D-ribose 5-phosphate. It carries out the reaction alpha-D-ribose 1-phosphate = D-ribose 5-phosphate. Its pathway is carbohydrate degradation; 2-deoxy-D-ribose 1-phosphate degradation; D-glyceraldehyde 3-phosphate and acetaldehyde from 2-deoxy-alpha-D-ribose 1-phosphate: step 1/2. Functionally, isomerase that catalyzes the conversion of deoxy-ribose 1-phosphate (dRib-1-P) and ribose 1-phosphate (Rib-1-P) to deoxy-ribose 5-phosphate (dRib-5-P) and ribose 5-phosphate (Rib-5-P), respectively. This is Phosphopentomutase from Herpetosiphon aurantiacus (strain ATCC 23779 / DSM 785 / 114-95).